The chain runs to 600 residues: Pentatricopeptide repeat-containing protein At3g29230 (600 aa).

PPR repeat units lie at residues Asp50 to Pro80, Asn81 to Ala115, Asp116 to Ser150, Asp151 to Arg183, Asp184 to Ser218, Trp219 to Arg245, Asn246 to Pro276, Asn279 to Phe313, Asp314 to Ser348, Asn349 to Lys379, Asp380 to Pro414, Asp415 to Val445, and Gln451 to Glu481. The type E motif stretch occupies residues Ile486–Glu561. A type E(+) motif region spans residues Asp562–Asp592.

It belongs to the PPR family. PCMP-E subfamily.

The chain is Pentatricopeptide repeat-containing protein At3g29230 (PCMP-E27) from Arabidopsis thaliana (Mouse-ear cress).